We begin with the raw amino-acid sequence, 888 residues long: 3-hydroxy-3-methylglutaryl-coenzyme A reductase (888 aa).

The Cytoplasmic portion of the chain corresponds to 1 to 9; that stretch reads MLSRLFRMH. A helical transmembrane segment spans residues 10–39; that stretch reads GLFVASHPWEVIVGTVTLTICMMSMNMFTG. Over 40–56 the chain is Lumenal; it reads NNKICGWNYECPKFEED. Residues 57–78 form a helical membrane-spanning segment; that stretch reads VLSSDIIILTITRCIAILYIYF. An SSD domain is found at 61 to 218; sequence DIIILTITRC…MTFFPACVSL (158 aa). The INSIG-binding motif motif lies at 75-78; that stretch reads YIYF. The Cytoplasmic portion of the chain corresponds to 79 to 89; that stretch reads QFQNLRQLGSK. A Glycyl lysine isopeptide (Lys-Gly) (interchain with G-Cter in ubiquitin) cross-link involves residue Lys89. Residues 90-114 traverse the membrane as a helical segment; sequence YILGIAGLFTIFSSFVFSTVVIHFL. The Lumenal portion of the chain corresponds to 115–123; sequence DKELTGLNE. A helical membrane pass occupies residues 124 to 149; it reads ALPFFLLLIDLSRASTLAKFALSSNS. Residues 150-159 are Cytoplasmic-facing; that stretch reads QDEVRENIAR. A helical transmembrane segment spans residues 160 to 187; that stretch reads GMAILGPTFTLDALVECLVIGVGTMSGV. Over 188-191 the chain is Lumenal; the sequence is RQLE. A helical transmembrane segment spans residues 192 to 220; it reads IMCCFGCMSVLANYFVFMTFFPACVSLVL. Topologically, residues 221 to 248 are cytoplasmic; it reads ELSRESREGRPIWLLSHFARVLEEEENK. A Glycyl lysine isopeptide (Lys-Gly) (interchain with G-Cter in ubiquitin) cross-link involves residue Lys248. The helical transmembrane segment at 249-275 threads the bilayer; sequence PNPVTQRVKMIMSLGLVLVHAHSRWIA. At 276–314 the chain is on the lumenal side; it reads DPSPQNSTADTSKVSLGLDENVSKRIEPSVSLWQFYLSK. Residues Asn281 and Asn296 are each glycosylated (N-linked (GlcNAc...) asparagine). The helical transmembrane segment at 315–339 threads the bilayer; it reads MISMDIEQVITLSLALLLAVKYIFF. Topologically, residues 340–888 are cytoplasmic; the sequence is EQTETESTLS…LQGACTKKTA (549 aa). Residues Glu559, Lys691, and Asp767 each act as charge relay system in the active site. His866 (proton donor) is an active-site residue. Phosphoserine; by AMPK is present on Ser872.

The protein belongs to the HMG-CoA reductase family. As to quaternary structure, homotetramer. Homodimer. Interacts (via its SSD) with INSIG1; the interaction, accelerated by sterols, leads to the recruitment of HMGCR to AMFR/gp78 for its ubiquitination by the sterol-mediated ERAD pathway. Interacts with UBIAD1. In terms of processing, undergoes sterol-mediated ubiquitination and ER-associated degradation (ERAD). Accumulation of sterols in the endoplasmic reticulum (ER) membrane, triggers binding of the reductase to the ER membrane protein INSIG1 or INSIG2. The INSIG1 binding leads to the recruitment of the ubiquitin ligase, AMFR/gp78, RNF139 or RNF145, initiating ubiquitination of the reductase. The ubiquitinated reductase is then extracted from the ER membrane and delivered to cytosolic 26S proteosomes by a mechanism probably mediated by the ATPase Valosin-containing protein VCP/p97. The INSIG2-binding leads to the recruitment of the ubiquitin ligase RNF139, initiating ubiquitination of the reductase. Lys-248 is the main site of ubiquitination. Ubiquitination is enhanced by the presence of a geranylgeranylated protein. N-glycosylated. Deglycosylated by NGLY1 on release from the endoplasmic reticulum (ER) in a sterol-mediated manner. Post-translationally, phosphorylated. Phosphorylation at Ser-872 reduces the catalytic activity.

It is found in the endoplasmic reticulum membrane. It localises to the peroxisome membrane. The catalysed reaction is (R)-mevalonate + 2 NADP(+) + CoA = (3S)-3-hydroxy-3-methylglutaryl-CoA + 2 NADPH + 2 H(+). It participates in metabolic intermediate biosynthesis; (R)-mevalonate biosynthesis; (R)-mevalonate from acetyl-CoA: step 3/3. Regulated by a negative feedback mechanism through sterols and non-sterol metabolites derived from mevalonate. Phosphorylation at Ser-872 down-regulates the catalytic activity. In terms of biological role, catalyzes the conversion of (3S)-hydroxy-3-methylglutaryl-CoA (HMG-CoA) to mevalonic acid, the rate-limiting step in the synthesis of cholesterol and other isoprenoids, thus plays a critical role in cellular cholesterol homeostasis. The sequence is that of 3-hydroxy-3-methylglutaryl-coenzyme A reductase (HMGCR) from Pongo abelii (Sumatran orangutan).